Consider the following 261-residue polypeptide: Intermembrane phospholipid transport system permease protein MlaE (261 aa).

Topologically, residues 1–12 (MIVNFISALGKQ) are cytoplasmic. The chain crosses the membrane as a helical span at residues 13-33 (VIDFFRALGRAGFMLFGALIG). The Periplasmic portion of the chain corresponds to 34 to 49 (KPQIRKHFPLLVKQMH). The chain crosses the membrane as a helical span at residues 50-70 (VLGVQSLLIILLSGLFIGMVL). At 71–147 (GLQGYVVLID…DPLRRVIAPR (77 aa)) the chain is on the cytoplasmic side. Residues 148–168 (FWAGVISMPVLSILFIAIGIW) traverse the membrane as a helical segment. The Periplasmic segment spans residues 169-198 (GGSLVGVDWKGVDSGSFWSVMQNSVSWSYD). The chain crosses the membrane as a helical span at residues 199–219 (ILNGFIKAVFFAVAVTWIALF). At 220–238 (NGYDCMPTSEGISQATTRT) the chain is on the cytoplasmic side. Residues 239–259 (VVHASLVVLGLDFILTAIMFG) traverse the membrane as a helical segment. At 260 to 261 (AG) the chain is on the periplasmic side.

The protein belongs to the MlaE permease family. As to quaternary structure, the complex is composed of two ATP-binding proteins (MlaF), two transmembrane proteins (MlaE), two cytoplasmic solute-binding proteins (MlaB) and six periplasmic solute-binding proteins (MlaD).

It localises to the cell inner membrane. Functionally, part of the ABC transporter complex MlaFEDB, which is involved in a phospholipid transport pathway that maintains lipid asymmetry in the outer membrane by retrograde trafficking of phospholipids from the outer membrane to the inner membrane. Probably responsible for the translocation of the substrate across the membrane. This chain is Intermembrane phospholipid transport system permease protein MlaE, found in Haemophilus influenzae (strain ATCC 51907 / DSM 11121 / KW20 / Rd).